A 76-amino-acid chain; its full sequence is uncharacterized protein (76 aa).

A run of 3 helical transmembrane segments spans residues 2–22 (LKVAKISVSCIVLVLCIYSLF), 28–48 (LLIVVQLFVAALLSLVGVEAI), and 56–76 (EYLLFGSAAFLLVVNGVKFII).

It is found in the cell membrane. This is an uncharacterized protein from Bacillus subtilis (strain 168).